The chain runs to 201 residues: Probable molybdenum cofactor guanylyltransferase (201 aa).

GTP-binding positions include 6–8, Lys18, Asp65, and Asp97; that span reads LAG. A Mg(2+)-binding site is contributed by Asp97.

This sequence belongs to the MobA family. Mg(2+) serves as cofactor.

Its subcellular location is the cytoplasm. It catalyses the reaction Mo-molybdopterin + GTP + H(+) = Mo-molybdopterin guanine dinucleotide + diphosphate. Its function is as follows. Transfers a GMP moiety from GTP to Mo-molybdopterin (Mo-MPT) cofactor (Moco or molybdenum cofactor) to form Mo-molybdopterin guanine dinucleotide (Mo-MGD) cofactor. The polypeptide is Probable molybdenum cofactor guanylyltransferase (Staphylococcus haemolyticus (strain JCSC1435)).